A 175-amino-acid chain; its full sequence is Ribosome maturation factor RimM (175 aa).

One can recognise a PRC barrel domain in the interval 98 to 175; it reads EGEYYWYQLE…EMRVDWDADF (78 aa).

It belongs to the RimM family. Binds ribosomal protein uS19.

The protein localises to the cytoplasm. Functionally, an accessory protein needed during the final step in the assembly of 30S ribosomal subunit, possibly for assembly of the head region. Essential for efficient processing of 16S rRNA. May be needed both before and after RbfA during the maturation of 16S rRNA. It has affinity for free ribosomal 30S subunits but not for 70S ribosomes. In Pseudomonas paraeruginosa (strain DSM 24068 / PA7) (Pseudomonas aeruginosa (strain PA7)), this protein is Ribosome maturation factor RimM.